A 540-amino-acid chain; its full sequence is Signal peptide peptidase-like 3 (540 aa).

The signal sequence occupies residues 1-28 (MSSFDPPNHRYSALVLILLLLGFSVAAA). Residues 29–194 (DDVSWTEDSS…LYAPKRPAVD (166 aa)) are Lumenal-facing. The region spanning 98–172 (SHLSSRLDGH…ISKSSGDALN (75 aa)) is the PA domain. 2 N-linked (GlcNAc...) asparagine glycosylation sites follow: asparagine 155 and asparagine 172. Residues 195 to 215 (LTAGLLLLMAVGTVVVASLWS) traverse the membrane as a helical segment. At 216 to 250 (ELTDPDQANESYSILAKDVSSAGTRKDDPEKEILD) the chain is on the cytoplasmic side. Residues 251 to 273 (ISVTGAVFFIVTASIFLLLLFYF) traverse the membrane as a helical segment. Topologically, residues 274 to 276 (MSS) are lumenal. The chain crosses the membrane as a helical span at residues 277-299 (WFVWVLTIFFCIGGMQGMHNIIM). Topologically, residues 300–321 (AVILRKCRHLARKSVKLPLLGT) are cytoplasmic. Residues 322 to 342 (MSVLSLLVNIVCLAFAVFWFI) traverse the membrane as a helical segment. The Lumenal portion of the chain corresponds to 343 to 347 (KRHTS). A helical transmembrane segment spans residues 348–368 (YSWVGQDILGICLMITALQVV). At 369–377 (RLPNIKVAT) the chain is on the cytoplasmic side. The helical transmembrane segment at 378-398 (VLLCCAFVYDIFWVFISPLIF) threads the bilayer. Residue aspartate 387 is part of the active site. Residues 399–429 (HESVMIVVAQGDSSTGESIPMLLRIPRFFDP) are Lumenal-facing. A helical membrane pass occupies residues 430-450 (WGGYDMIGFGDILFPGLLISF). Residue aspartate 440 is part of the active site. Over 451–466 (ASRYDKIKKRVISNGY) the chain is Cytoplasmic. A helical transmembrane segment spans residues 467–487 (FLWLTIGYGIGLLLTYLGLYL). Residues 488 to 492 (MDGHG) are Lumenal-facing. The chain crosses the membrane as a helical span at residues 493 to 513 (QPALLYIVPCTLGLAVILGLV). The PAL signature appears at 494–496 (PAL). The Cytoplasmic portion of the chain corresponds to 514-540 (RGELKELWNYGIEESESHTPEDPMPVA).

It belongs to the peptidase A22B family. Glycosylated. In terms of tissue distribution, ubiquitous.

The protein localises to the endosome membrane. Intramembrane-cleaving aspartic protease (I-CLiP) that cleaves type II membrane signal peptides in the hydrophobic plane of the membrane. This Arabidopsis thaliana (Mouse-ear cress) protein is Signal peptide peptidase-like 3 (SPPL3).